We begin with the raw amino-acid sequence, 85 residues long: Alpha-toxin Ac2 (85 aa).

Residues 1 to 19 (MNYLVMISLALLFMTGVES) form the signal peptide. The LCN-type CS-alpha/beta domain occupies 21–83 (KDGYIVDDRN…VRTKGPGRCK (63 aa)). 4 disulfide bridges follow: Cys31-Cys82, Cys35-Cys55, Cys41-Cys65, and Cys45-Cys67. Residue Lys83 is modified to Lysine amide.

The protein belongs to the long (4 C-C) scorpion toxin superfamily. Sodium channel inhibitor family. Alpha subfamily. Expressed by the venom gland.

The protein localises to the secreted. Alpha toxins bind voltage-independently at site-3 of sodium channels (Nav) and inhibit the inactivation of the activated channels, thereby blocking neuronal transmission. The polypeptide is Alpha-toxin Ac2 (Androctonus crassicauda (Arabian fat-tailed scorpion)).